A 155-amino-acid polypeptide reads, in one-letter code: Histone H2B.4 (155 aa).

A compositionally biased stretch (basic and acidic residues) spans 1–28 (MAPKTKEEKPASEAVEPKAEAKPKAEKA). The disordered stretch occupies residues 1–62 (MAPKTKEEKP…GDKKKKKAKV (62 aa)). Residues 29-40 (PKKKEKKAPAKK) are compositionally biased toward basic residues. Lys-151 participates in a covalent cross-link: Glycyl lysine isopeptide (Lys-Gly) (interchain with G-Cter in ubiquitin).

This sequence belongs to the histone H2B family. The nucleosome is a histone octamer containing two molecules each of H2A, H2B, H3 and H4 assembled in one H3-H4 heterotetramer and two H2A-H2B heterodimers. The octamer wraps approximately 147 bp of DNA. Monoubiquitinated to form H2BK143ub1; may give a specific tag for epigenetic transcriptional activation.

It is found in the nucleus. Its subcellular location is the chromosome. Core component of nucleosome. Nucleosomes wrap and compact DNA into chromatin, limiting DNA accessibility to the cellular machineries which require DNA as a template. Histones thereby play a central role in transcription regulation, DNA repair, DNA replication and chromosomal stability. DNA accessibility is regulated via a complex set of post-translational modifications of histones, also called histone code, and nucleosome remodeling. This is Histone H2B.4 from Volvox carteri (Green alga).